Reading from the N-terminus, the 458-residue chain is Vitamin K-dependent protein C (458 aa).

An N-terminal signal peptide occupies residues 1–27; it reads IPDDVGYRNQKTASKEGVCVVSKCQDG. The propeptide occupies 28–36; the sequence is PNTLPRAKR. The Gla domain maps to 37–82; it reads ANSFLEELRPSSLERECVEEVCDLEEAKEIFQSVDDTLAFWYKYVD. A 4-carboxyglutamate mark is found at Glu-42, Glu-43, Glu-50, Glu-52, Glu-55, Glu-56, Glu-61, Glu-62, and Glu-65. Cysteines 53 and 58 form a disulfide. Disulfide bonds link Cys-86-Cys-105, Cys-95-Cys-100, Cys-99-Cys-114, and Cys-116-Cys-125. 2 consecutive EGF-like domains span residues 91–126 and 130–170; these read SEHP…SFCQ and RFSN…LQCE. Asp-107 is subject to (3R)-3-hydroxyaspartate. An N-linked (GlcNAc...) asparagine glycan is attached at Asn-133. Intrachain disulfides connect Cys-134–Cys-145, Cys-141–Cys-154, Cys-156–Cys-169, Cys-177–Cys-316, and Cys-235–Cys-251. A Peptidase S1 domain is found at 210-447; sequence IDGKLTRRGD…YLDWIHSHIE (238 aa). Residue His-250 is the Charge relay system of the active site. The N-linked (GlcNAc...) asparagine glycan is linked to Asn-287. Asp-296 functions as the Charge relay system in the catalytic mechanism. Asn-352 carries N-linked (GlcNAc...) asparagine glycosylation. 2 disulfide bridges follow: Cys-370–Cys-384 and Cys-395–Cys-423. The active-site Charge relay system is Ser-399.

This sequence belongs to the peptidase S1 family. In terms of assembly, synthesized as a single chain precursor, which is cleaved into a light chain and a heavy chain held together by a disulfide bond. The enzyme is then activated by thrombin, which cleaves a tetradecapeptide from the amino end of the heavy chain; this reaction, which occurs at the surface of endothelial cells, is strongly promoted by thrombomodulin. In terms of processing, the vitamin K-dependent, enzymatic carboxylation of some Glu residues allows the modified protein to bind calcium. Post-translationally, the iron and 2-oxoglutarate dependent 3-hydroxylation of aspartate and asparagine is (R) stereospecific within EGF domains. Plasma; synthesized in the liver.

It localises to the secreted. The protein resides in the golgi apparatus. Its subcellular location is the endoplasmic reticulum. The enzyme catalyses Degradation of blood coagulation factors Va and VIIIa.. Its function is as follows. Protein C is a vitamin K-dependent serine protease that regulates blood coagulation by inactivating factors Va and VIIIa in the presence of calcium ions and phospholipids. Exerts a protective effect on the endothelial cell barrier function. In Oryctolagus cuniculus (Rabbit), this protein is Vitamin K-dependent protein C (PROC).